A 260-amino-acid chain; its full sequence is Ribosomal RNA small subunit methyltransferase J (260 aa).

S-adenosyl-L-methionine is bound by residues 125–126 (ER) and D179.

This sequence belongs to the methyltransferase superfamily. RsmJ family.

The protein resides in the cytoplasm. The enzyme catalyses guanosine(1516) in 16S rRNA + S-adenosyl-L-methionine = N(2)-methylguanosine(1516) in 16S rRNA + S-adenosyl-L-homocysteine + H(+). In terms of biological role, specifically methylates the guanosine in position 1516 of 16S rRNA. This chain is Ribosomal RNA small subunit methyltransferase J, found in Pseudomonas fluorescens (strain ATCC BAA-477 / NRRL B-23932 / Pf-5).